The sequence spans 118 residues: Small ribosomal subunit protein uS13 (118 aa).

The disordered stretch occupies residues 91–118 (HRHSLPVRGQRTKTNARTRKGPRKPIRK).

This sequence belongs to the universal ribosomal protein uS13 family. Part of the 30S ribosomal subunit. Forms a loose heterodimer with protein S19. Forms two bridges to the 50S subunit in the 70S ribosome.

Functionally, located at the top of the head of the 30S subunit, it contacts several helices of the 16S rRNA. In the 70S ribosome it contacts the 23S rRNA (bridge B1a) and protein L5 of the 50S subunit (bridge B1b), connecting the 2 subunits; these bridges are implicated in subunit movement. Contacts the tRNAs in the A and P-sites. The sequence is that of Small ribosomal subunit protein uS13 from Hahella chejuensis (strain KCTC 2396).